The primary structure comprises 74 residues: uncharacterized protein (74 aa).

This is an uncharacterized protein from Rickettsia conorii (strain ATCC VR-613 / Malish 7).